We begin with the raw amino-acid sequence, 92 residues long: Co-chaperonin GroES (92 aa).

The protein belongs to the GroES chaperonin family. As to quaternary structure, heptamer of 7 subunits arranged in a ring. Interacts with the chaperonin GroEL.

It is found in the cytoplasm. In terms of biological role, together with the chaperonin GroEL, plays an essential role in assisting protein folding. The GroEL-GroES system forms a nano-cage that allows encapsulation of the non-native substrate proteins and provides a physical environment optimized to promote and accelerate protein folding. GroES binds to the apical surface of the GroEL ring, thereby capping the opening of the GroEL channel. This is Co-chaperonin GroES from Thermotoga maritima (strain ATCC 43589 / DSM 3109 / JCM 10099 / NBRC 100826 / MSB8).